We begin with the raw amino-acid sequence, 320 residues long: MRSAQVYRWQIPMDAGVVLRDRRLKTRDGLYVCLREGEREGWGEISPLPGFSQETWEDAQSVLLAWVNNWLAGDCEIPQMPSVAFGVSCALAELAETLPQAANYRAAPLCNGDPDDLILKLADMPGEKVAKVKVGLYEAVRDGMVVNLLLEAIPDLHLRLDANRAWTPLKGQQFAKYVNPDYRHRIAFLEEPCKTRDDSRAFARETGIAIAWDESLREPDFAFVAEEGVRAVVIKPTLTGSLDKVREQVQAAHALGLTAVISSSIESSLGLTQLARIAAWLTPDTIPGLDTLDLMQAQQVRRWPGSPLPLVDVDALERLL.

The Proton donor role is filled by Lys133. Mg(2+) contacts are provided by Asp161, Glu190, and Asp213. The Proton acceptor role is filled by Lys235.

Belongs to the mandelate racemase/muconate lactonizing enzyme family. MenC type 1 subfamily. A divalent metal cation is required as a cofactor.

The enzyme catalyses (1R,6R)-6-hydroxy-2-succinyl-cyclohexa-2,4-diene-1-carboxylate = 2-succinylbenzoate + H2O. The protein operates within quinol/quinone metabolism; 1,4-dihydroxy-2-naphthoate biosynthesis; 1,4-dihydroxy-2-naphthoate from chorismate: step 4/7. Its pathway is quinol/quinone metabolism; menaquinone biosynthesis. Converts 2-succinyl-6-hydroxy-2,4-cyclohexadiene-1-carboxylate (SHCHC) to 2-succinylbenzoate (OSB). This chain is o-succinylbenzoate synthase, found in Escherichia coli O45:K1 (strain S88 / ExPEC).